Here is a 228-residue protein sequence, read N- to C-terminus: R-spondin-4 (228 aa).

The first 19 residues, methionine 1–alanine 19, serve as a signal peptide directing secretion. N-linked (GlcNAc...) asparagine glycosylation is present at asparagine 34. 11 disulfide bridges follow: cysteine 35–cysteine 41, cysteine 38–cysteine 47, cysteine 50–cysteine 69, cysteine 73–cysteine 88, cysteine 91–cysteine 98, cysteine 95–cysteine 104, cysteine 107–cysteine 118, cysteine 122–cysteine 135, cysteine 139–cysteine 181, cysteine 150–cysteine 157, and cysteine 190–cysteine 196. An FU repeat occupies alanine 85–threonine 128. Residues glutamate 138–proline 197 form the TSP type-1 domain. Positions lysine 193–glutamine 228 are disordered. Residues arginine 203–glutamine 228 are compositionally biased toward basic residues.

Belongs to the R-spondin family. Binds heparin. Interacts with LGR4, LGR5 and LGR6.

Its subcellular location is the secreted. Its function is as follows. Activator of the canonical Wnt signaling pathway by acting as a ligand for LGR4-6 receptors. Upon binding to LGR4-6 (LGR4, LGR5 or LGR6), LGR4-6 associate with phosphorylated LRP6 and frizzled receptors that are activated by extracellular Wnt receptors, triggering the canonical Wnt signaling pathway to increase expression of target genes. Also regulates the canonical Wnt/beta-catenin-dependent pathway and non-canonical Wnt signaling by acting as an inhibitor of ZNRF3, an important regulator of the Wnt signaling pathway. The polypeptide is R-spondin-4 (Rspo4) (Mus musculus (Mouse)).